We begin with the raw amino-acid sequence, 173 residues long: Mesencephalic astrocyte-derived neurotrophic factor homolog (173 aa).

Positions 1 to 22 (MKTAHLVVVVCFLAGALQTAVA) are cleaved as a signal peptide. Intrachain disulfides connect cysteine 28–cysteine 114, cysteine 31–cysteine 103, cysteine 61–cysteine 72, and cysteine 148–cysteine 151.

It belongs to the ARMET family.

It is found in the secreted. Its function is as follows. Required during the maturation of the embryonic nervous system for maintenance of neuronal and cuticular connectivity. Essential for maintenance of dopaminergic neurons and dopamine levels. The chain is Mesencephalic astrocyte-derived neurotrophic factor homolog from Drosophila ananassae (Fruit fly).